A 496-amino-acid chain; its full sequence is Guanosine-5'-triphosphate,3'-diphosphate pyrophosphatase (496 aa).

The protein belongs to the GppA/Ppx family. GppA subfamily.

The enzyme catalyses guanosine 3'-diphosphate 5'-triphosphate + H2O = guanosine 3',5'-bis(diphosphate) + phosphate + H(+). It participates in purine metabolism; ppGpp biosynthesis; ppGpp from GTP: step 2/2. In terms of biological role, catalyzes the conversion of pppGpp to ppGpp. Guanosine pentaphosphate (pppGpp) is a cytoplasmic signaling molecule which together with ppGpp controls the 'stringent response', an adaptive process that allows bacteria to respond to amino acid starvation, resulting in the coordinated regulation of numerous cellular activities. The protein is Guanosine-5'-triphosphate,3'-diphosphate pyrophosphatase of Aeromonas hydrophila subsp. hydrophila (strain ATCC 7966 / DSM 30187 / BCRC 13018 / CCUG 14551 / JCM 1027 / KCTC 2358 / NCIMB 9240 / NCTC 8049).